Reading from the N-terminus, the 317-residue chain is Transaldolase (317 aa).

Lysine 126 acts as the Schiff-base intermediate with substrate in catalysis.

This sequence belongs to the transaldolase family. Type 1 subfamily. As to quaternary structure, homodimer.

It is found in the cytoplasm. It catalyses the reaction D-sedoheptulose 7-phosphate + D-glyceraldehyde 3-phosphate = D-erythrose 4-phosphate + beta-D-fructose 6-phosphate. It participates in carbohydrate degradation; pentose phosphate pathway; D-glyceraldehyde 3-phosphate and beta-D-fructose 6-phosphate from D-ribose 5-phosphate and D-xylulose 5-phosphate (non-oxidative stage): step 2/3. In terms of biological role, transaldolase is important for the balance of metabolites in the pentose-phosphate pathway. The chain is Transaldolase from Burkholderia ambifaria (strain MC40-6).